A 307-amino-acid chain; its full sequence is Elongation factor Ts (307 aa).

The interval 80 to 83 (TDFV) is involved in Mg(2+) ion dislocation from EF-Tu.

The protein belongs to the EF-Ts family.

The protein resides in the cytoplasm. Its function is as follows. Associates with the EF-Tu.GDP complex and induces the exchange of GDP to GTP. It remains bound to the aminoacyl-tRNA.EF-Tu.GTP complex up to the GTP hydrolysis stage on the ribosome. The sequence is that of Elongation factor Ts from Methylobacterium nodulans (strain LMG 21967 / CNCM I-2342 / ORS 2060).